A 57-amino-acid polypeptide reads, in one-letter code: Small ribosomal subunit protein bS21 (57 aa).

Residues 35–57 are disordered; sequence RERYEKPSLRRKRKQEAARKRNR.

Belongs to the bacterial ribosomal protein bS21 family.

This Thermosynechococcus vestitus (strain NIES-2133 / IAM M-273 / BP-1) protein is Small ribosomal subunit protein bS21.